The sequence spans 263 residues: Undecaprenyl-diphosphatase 2 (263 aa).

The next 8 helical transmembrane spans lie at 15–37 (GLTE…LIGF), 42–62 (AKVF…VIFW), 79–99 (SLNL…GVLF), 107–127 (LFGP…MIVA), 142–162 (ITYK…WPGF), 183–203 (AEYT…LDLI), 216–236 (LFVT…VSFL), and 242–262 (VKLT…YFFI).

Belongs to the UppP family.

Its subcellular location is the cell membrane. It carries out the reaction di-trans,octa-cis-undecaprenyl diphosphate + H2O = di-trans,octa-cis-undecaprenyl phosphate + phosphate + H(+). Its function is as follows. Catalyzes the dephosphorylation of undecaprenyl diphosphate (UPP). Confers resistance to bacitracin. The polypeptide is Undecaprenyl-diphosphatase 2 (Bacillus cereus (strain ATCC 14579 / DSM 31 / CCUG 7414 / JCM 2152 / NBRC 15305 / NCIMB 9373 / NCTC 2599 / NRRL B-3711)).